The primary structure comprises 174 residues: Cytochrome c oxidase subunit 5A, mitochondrial (174 aa).

A mitochondrion-targeting transit peptide spans 1–29; sequence MASLTRAVTRLAIAGRQAVRTIATTTPVS.

This sequence belongs to the cytochrome c oxidase subunit 5A family. As to quaternary structure, component of the cytochrome c oxidase (complex IV, CIV), a multisubunit enzyme composed of a catalytic core of 3 subunits and several supernumerary subunits. The complex exists as a monomer or a dimer and forms supercomplexes (SCs) in the inner mitochondrial membrane with ubiquinol-cytochrome c oxidoreductase (cytochrome b-c1 complex, complex III, CIII).

The protein localises to the mitochondrion inner membrane. It participates in energy metabolism; oxidative phosphorylation. Its function is as follows. Component of the cytochrome c oxidase, the last enzyme in the mitochondrial electron transport chain which drives oxidative phosphorylation. The respiratory chain contains 3 multisubunit complexes succinate dehydrogenase (complex II, CII), ubiquinol-cytochrome c oxidoreductase (cytochrome b-c1 complex, complex III, CIII) and cytochrome c oxidase (complex IV, CIV), that cooperate to transfer electrons derived from NADH and succinate to molecular oxygen, creating an electrochemical gradient over the inner membrane that drives transmembrane transport and the ATP synthase. Cytochrome c oxidase is the component of the respiratory chain that catalyzes the reduction of oxygen to water. Electrons originating from reduced cytochrome c in the intermembrane space (IMS) are transferred via the dinuclear copper A center (CU(A)) of subunit 2 and heme A of subunit 1 to the active site in subunit 1, a binuclear center (BNC) formed by heme A3 and copper B (CU(B)). The BNC reduces molecular oxygen to 2 water molecules using 4 electrons from cytochrome c in the IMS and 4 protons from the mitochondrial matrix. The sequence is that of Cytochrome c oxidase subunit 5A, mitochondrial from Caenorhabditis elegans.